The chain runs to 369 residues: Anthranilate phosphoribosyltransferase (369 aa).

5-phospho-alpha-D-ribose 1-diphosphate contacts are provided by residues glycine 99, 102–103, 109–112, 127–135, and serine 139; these read GD, NVST, and KHGNRGVSS. Glycine 99 is a binding site for anthranilate. Position 111 (serine 111) interacts with Mg(2+). Asparagine 130 contributes to the anthranilate binding site. Position 185 (arginine 185) interacts with anthranilate. Residues aspartate 244 and glutamate 245 each contribute to the Mg(2+) site.

Belongs to the anthranilate phosphoribosyltransferase family. In terms of assembly, homodimer. The cofactor is Mg(2+).

It carries out the reaction N-(5-phospho-beta-D-ribosyl)anthranilate + diphosphate = 5-phospho-alpha-D-ribose 1-diphosphate + anthranilate. Its pathway is amino-acid biosynthesis; L-tryptophan biosynthesis; L-tryptophan from chorismate: step 2/5. In terms of biological role, catalyzes the transfer of the phosphoribosyl group of 5-phosphorylribose-1-pyrophosphate (PRPP) to anthranilate to yield N-(5'-phosphoribosyl)-anthranilate (PRA). This Psychrobacter sp. (strain PRwf-1) protein is Anthranilate phosphoribosyltransferase.